A 469-amino-acid chain; its full sequence is 3-isopropylmalate dehydratase large subunit (469 aa).

Positions 350, 410, and 413 each coordinate [4Fe-4S] cluster.

The protein belongs to the aconitase/IPM isomerase family. LeuC type 1 subfamily. In terms of assembly, heterodimer of LeuC and LeuD. [4Fe-4S] cluster is required as a cofactor.

The enzyme catalyses (2R,3S)-3-isopropylmalate = (2S)-2-isopropylmalate. It functions in the pathway amino-acid biosynthesis; L-leucine biosynthesis; L-leucine from 3-methyl-2-oxobutanoate: step 2/4. Catalyzes the isomerization between 2-isopropylmalate and 3-isopropylmalate, via the formation of 2-isopropylmaleate. This is 3-isopropylmalate dehydratase large subunit from Agrobacterium fabrum (strain C58 / ATCC 33970) (Agrobacterium tumefaciens (strain C58)).